We begin with the raw amino-acid sequence, 77 residues long: Large ribosomal subunit protein bL28 (77 aa).

Belongs to the bacterial ribosomal protein bL28 family.

The protein is Large ribosomal subunit protein bL28 of Polynucleobacter necessarius subsp. necessarius (strain STIR1).